The primary structure comprises 225 residues: Probable molybdenum cofactor guanylyltransferase (225 aa).

Residues 20–22 (LAG), lysine 33, aspartate 88, and aspartate 117 each bind GTP. Aspartate 117 provides a ligand contact to Mg(2+).

This sequence belongs to the MobA family. Mg(2+) is required as a cofactor.

The protein localises to the cytoplasm. It catalyses the reaction Mo-molybdopterin + GTP + H(+) = Mo-molybdopterin guanine dinucleotide + diphosphate. In terms of biological role, transfers a GMP moiety from GTP to Mo-molybdopterin (Mo-MPT) cofactor (Moco or molybdenum cofactor) to form Mo-molybdopterin guanine dinucleotide (Mo-MGD) cofactor. The sequence is that of Probable molybdenum cofactor guanylyltransferase from Methanosarcina acetivorans (strain ATCC 35395 / DSM 2834 / JCM 12185 / C2A).